We begin with the raw amino-acid sequence, 403 residues long: Histidine--tRNA ligase (403 aa).

The protein belongs to the class-II aminoacyl-tRNA synthetase family. Homodimer.

The protein resides in the cytoplasm. The enzyme catalyses tRNA(His) + L-histidine + ATP = L-histidyl-tRNA(His) + AMP + diphosphate + H(+). The protein is Histidine--tRNA ligase of Sulfurimonas denitrificans (strain ATCC 33889 / DSM 1251) (Thiomicrospira denitrificans (strain ATCC 33889 / DSM 1251)).